Here is a 283-residue protein sequence, read N- to C-terminus: Pantothenate synthetase (283 aa).

Residue 31–38 (MGALHDGH) coordinates ATP. Catalysis depends on H38, which acts as the Proton donor. Q62 is a (R)-pantoate binding site. A beta-alanine-binding site is contributed by Q62. Residue 148–151 (GKKD) participates in ATP binding. Residue Q154 participates in (R)-pantoate binding. ATP-binding positions include I177 and 185–188 (KSSR).

Belongs to the pantothenate synthetase family. Homodimer.

The protein localises to the cytoplasm. The catalysed reaction is (R)-pantoate + beta-alanine + ATP = (R)-pantothenate + AMP + diphosphate + H(+). The protein operates within cofactor biosynthesis; (R)-pantothenate biosynthesis; (R)-pantothenate from (R)-pantoate and beta-alanine: step 1/1. Functionally, catalyzes the condensation of pantoate with beta-alanine in an ATP-dependent reaction via a pantoyl-adenylate intermediate. In Oceanobacillus iheyensis (strain DSM 14371 / CIP 107618 / JCM 11309 / KCTC 3954 / HTE831), this protein is Pantothenate synthetase.